The chain runs to 377 residues: Flap endonuclease 1 (377 aa).

Residues methionine 1–arginine 104 are N-domain. Residue aspartate 34 coordinates Mg(2+). DNA-binding residues include arginine 47 and arginine 70. The Mg(2+) site is built by aspartate 86, glutamate 158, glutamate 160, aspartate 179, and aspartate 181. The segment at asparagine 122 to histidine 253 is I-domain. Residue glutamate 158 coordinates DNA. Positions 231 and 233 each coordinate DNA. Aspartate 233 provides a ligand contact to Mg(2+). An interaction with PCNA region spans residues threonine 336 to phenylalanine 344. Positions glutamine 337–lysine 377 are disordered. Residues glutamine 363–lysine 377 are compositionally biased toward basic residues.

The protein belongs to the XPG/RAD2 endonuclease family. FEN1 subfamily. As to quaternary structure, interacts with PCNA. Three molecules of FEN1 bind to one PCNA trimer with each molecule binding to one PCNA monomer. PCNA stimulates the nuclease activity without altering cleavage specificity. Requires Mg(2+) as cofactor. Post-translationally, phosphorylated. Phosphorylation upon DNA damage induces relocalization to the nuclear plasma.

The protein localises to the nucleus. The protein resides in the nucleolus. Its subcellular location is the nucleoplasm. It localises to the mitochondrion. Functionally, structure-specific nuclease with 5'-flap endonuclease and 5'-3' exonuclease activities involved in DNA replication and repair. During DNA replication, cleaves the 5'-overhanging flap structure that is generated by displacement synthesis when DNA polymerase encounters the 5'-end of a downstream Okazaki fragment. It enters the flap from the 5'-end and then tracks to cleave the flap base, leaving a nick for ligation. Also involved in the long patch base excision repair (LP-BER) pathway, by cleaving within the apurinic/apyrimidinic (AP) site-terminated flap. Acts as a genome stabilization factor that prevents flaps from equilibrating into structures that lead to duplications and deletions. Also possesses 5'-3' exonuclease activity on nicked or gapped double-stranded DNA, and exhibits RNase H activity. Also involved in replication and repair of rDNA and in repairing mitochondrial DNA. The protein is Flap endonuclease 1 of Nematostella vectensis (Starlet sea anemone).